The chain runs to 443 residues: Probable D-serine dehydratase (443 aa).

An N6-(pyridoxal phosphate)lysine modification is found at Lys116.

It belongs to the serine/threonine dehydratase family. DsdA subfamily. Pyridoxal 5'-phosphate is required as a cofactor.

It catalyses the reaction D-serine = pyruvate + NH4(+). The sequence is that of Probable D-serine dehydratase from Bacillus cereus (strain B4264).